A 428-amino-acid chain; its full sequence is Enolase (428 aa).

Glutamine 165 lines the (2R)-2-phosphoglycerate pocket. Residue glutamate 207 is the Proton donor of the active site. Residues aspartate 244, glutamate 285, and aspartate 312 each coordinate Mg(2+). (2R)-2-phosphoglycerate contacts are provided by lysine 337, arginine 366, serine 367, and lysine 388. The active-site Proton acceptor is lysine 337.

It belongs to the enolase family. Component of the RNA degradosome, a multiprotein complex involved in RNA processing and mRNA degradation. Requires Mg(2+) as cofactor.

It localises to the cytoplasm. Its subcellular location is the secreted. The protein localises to the cell surface. The catalysed reaction is (2R)-2-phosphoglycerate = phosphoenolpyruvate + H2O. It participates in carbohydrate degradation; glycolysis; pyruvate from D-glyceraldehyde 3-phosphate: step 4/5. Functionally, catalyzes the reversible conversion of 2-phosphoglycerate (2-PG) into phosphoenolpyruvate (PEP). It is essential for the degradation of carbohydrates via glycolysis. The chain is Enolase from Coxiella burnetii (strain Dugway 5J108-111).